Here is a 319-residue protein sequence, read N- to C-terminus: tRNA-cytidine(32) 2-sulfurtransferase (319 aa).

Positions 43 to 48 (SGGKDS) match the PP-loop motif motif. 3 residues coordinate [4Fe-4S] cluster: C118, C121, and C209.

It belongs to the TtcA family. In terms of assembly, homodimer. Mg(2+) is required as a cofactor. It depends on [4Fe-4S] cluster as a cofactor.

The protein resides in the cytoplasm. The catalysed reaction is cytidine(32) in tRNA + S-sulfanyl-L-cysteinyl-[cysteine desulfurase] + AH2 + ATP = 2-thiocytidine(32) in tRNA + L-cysteinyl-[cysteine desulfurase] + A + AMP + diphosphate + H(+). The protein operates within tRNA modification. In terms of biological role, catalyzes the ATP-dependent 2-thiolation of cytidine in position 32 of tRNA, to form 2-thiocytidine (s(2)C32). The sulfur atoms are provided by the cysteine/cysteine desulfurase (IscS) system. In Neisseria gonorrhoeae (strain NCCP11945), this protein is tRNA-cytidine(32) 2-sulfurtransferase.